The chain runs to 168 residues: 2-C-methyl-D-erythritol 2,4-cyclodiphosphate synthase (168 aa).

A divalent metal cation-binding residues include Asp13 and His15. Residues 13-15 (DVH) and 39-40 (HS) each bind 4-CDP-2-C-methyl-D-erythritol 2-phosphate. His47 lines the a divalent metal cation pocket. 4-CDP-2-C-methyl-D-erythritol 2-phosphate-binding positions include 61-63 (DIG), 66-70 (FPDTD), Phe144, and Arg147.

The protein belongs to the IspF family. In terms of assembly, homotrimer. It depends on a divalent metal cation as a cofactor.

It carries out the reaction 4-CDP-2-C-methyl-D-erythritol 2-phosphate = 2-C-methyl-D-erythritol 2,4-cyclic diphosphate + CMP. It functions in the pathway isoprenoid biosynthesis; isopentenyl diphosphate biosynthesis via DXP pathway; isopentenyl diphosphate from 1-deoxy-D-xylulose 5-phosphate: step 4/6. Involved in the biosynthesis of isopentenyl diphosphate (IPP) and dimethylallyl diphosphate (DMAPP), two major building blocks of isoprenoid compounds. Catalyzes the conversion of 4-diphosphocytidyl-2-C-methyl-D-erythritol 2-phosphate (CDP-ME2P) to 2-C-methyl-D-erythritol 2,4-cyclodiphosphate (ME-CPP) with a corresponding release of cytidine 5-monophosphate (CMP). The protein is 2-C-methyl-D-erythritol 2,4-cyclodiphosphate synthase of Ralstonia nicotianae (strain ATCC BAA-1114 / GMI1000) (Ralstonia solanacearum).